The primary structure comprises 1765 residues: Sodium channel protein type 11 subunit alpha (1765 aa).

At 1–126 the chain is on the cytoplasmic side; it reads MEERYYPVIF…PIRSFMIRIS (126 aa). An I repeat occupies 115–406; that stretch reads FNPIRSFMIR…VTMAYEEQNR (292 aa). Residues 127-148 traverse the membrane as a helical segment; the sequence is VHSVFSMFIICTVIINCMFMAN. The N-linked (GlcNAc...) asparagine glycan is linked to N149. Topologically, residues 149–159 are extracellular; that stretch reads NSSVDSRPSSN. The helical transmembrane segment at 160-179 threads the bilayer; the sequence is IPEYVFIGIYVLEAVIKILA. Over 180 to 191 the chain is Cytoplasmic; that stretch reads RGFIVDEFSYLR. The chain crosses the membrane as a helical span at residues 192 to 211; sequence DPWNWLDFIVIGTAIAPCFL. The Extracellular segment spans residues 212–219; that stretch reads GNKVNNLS. The N-linked (GlcNAc...) asparagine glycan is linked to N217. The chain crosses the membrane as a helical; Voltage-sensor span at residues 220–239; that stretch reads TLRTFRVLRALKAISVISGL. The Cytoplasmic portion of the chain corresponds to 240 to 255; that stretch reads KVIVGALLRSVKKLVD. A helical membrane pass occupies residues 256-269; it reads VMVLTLFCLSIFAL. Topologically, residues 270 to 342 are extracellular; it reads VGQQLFMGIL…PDYNYTNFDS (73 aa). C283 and C320 are oxidised to a cystine. Residues N303, N327, and N336 are each glycosylated (N-linked (GlcNAc...) asparagine). Positions 343–367 form an intramembrane region, pore-forming; that stretch reads FGWSFLAMFRVMTQDSWEKLYRQIL. Over 368–374 the chain is Extracellular; it reads RTSGIYF. The helical transmembrane segment at 375–400 threads the bilayer; it reads VFFFVVVIFLGSFYLLNLTLAVVTMA. At 401 to 570 the chain is on the cytoplasmic side; that stretch reads YEEQNRNVAA…WLCIKKVLQT (170 aa). Residues 470–490 form a disordered region; sequence RGSKTARASASDSEDDASKNP. An II repeat occupies 557–821; that stretch reads CSPPWLCIKK…EGETRKTKVQ (265 aa). The chain crosses the membrane as a helical span at residues 571 to 594; that stretch reads IMTDPFTELAITICIIVNTVFLAM. Residues 595-605 are Extracellular-facing; that stretch reads EHHNMDNSLKD. Residues 606-629 traverse the membrane as a helical segment; the sequence is ILKIGNWVFTGIFIAEMCLKIIAL. At 630–637 the chain is on the cytoplasmic side; that stretch reads DPYHYFRH. The chain crosses the membrane as a helical span at residues 638-659; that stretch reads GWNIFDSIVALVSLADVLFHKL. Residues 660–664 lie on the Extracellular side of the membrane; that stretch reads SKNLS. N-linked (GlcNAc...) asparagine glycosylation is present at N662. Residues 665-684 form a helical; Voltage-sensor membrane-spanning segment; sequence FLASLRVLRVFKLAKSWPTL. At 685-699 the chain is on the cytoplasmic side; sequence NTLIKIIGHSVGALG. Residues 700 to 722 form a helical membrane-spanning segment; it reads NLTVVLTIVVFIFSVVGMRLFGA. Residues 723 to 742 are Extracellular-facing; sequence KFNKTCSTSPESLRRWHMGD. N-linked (GlcNAc...) asparagine glycosylation is present at N725. The pore-forming intramembrane region spans 743 to 763; that stretch reads FYHSFLVVFRILCGEWIENMW. At 764–773 the chain is on the extracellular side; the sequence is ECMQEMEGSP. A disulfide bridge links C765 with C775. The chain crosses the membrane as a helical span at residues 774 to 799; sequence LCVIVFVLIMVVGKLVVLNLFIALLL. The Cytoplasmic segment spans residues 800-1030; that stretch reads NSFSNEEKDG…WWNLRKTCYQ (231 aa). The segment at 850 to 869 is disordered; that stretch reads NSPKPNEATESFAGESRDTA. An III repeat occupies 1023–1320; that stretch reads NLRKTCYQIV…KKYYNAMKKL (298 aa). Residues 1031 to 1053 traverse the membrane as a helical segment; it reads IVKHSWFESFIIFVILLSSGALI. Topologically, residues 1054-1067 are extracellular; the sequence is FEDVNLPSRPQVEK. Residues 1068 to 1093 traverse the membrane as a helical segment; sequence LLKCTDNIFTFIFLLEMILKWVAFGF. At 1094–1099 the chain is on the cytoplasmic side; that stretch reads RKYFTS. A helical transmembrane segment spans residues 1100–1117; it reads AWCWLDFLIVVVSGLSLT. A topological domain (extracellular) is located at residue N1118. The chain crosses the membrane as a helical; Voltage-sensor span at residues 1119-1140; sequence LPNLKSFRNLRALRPLRALSQF. At 1141–1159 the chain is on the cytoplasmic side; the sequence is EGMKVVVNALMSAIPAILN. Residues 1160–1181 traverse the membrane as a helical segment; sequence VLLVCLIFWLIFCILGVNFFSG. Residues 1182–1224 are Extracellular-facing; sequence KFGRCINGTDINKYFNASNVPNQSQCLVSNYTWKVPNVNFDNV. N-linked (GlcNAc...) asparagine glycans are attached at residues N1188, N1197, N1203, and N1211. The pore-forming intramembrane region spans 1225–1246; it reads GNAYLALLQVATYKGWLDIMNA. Topologically, residues 1247–1262 are extracellular; it reads AVDSRGKDEQPAFEAN. The chain crosses the membrane as a helical span at residues 1263–1289; it reads LYAYLYFVVFIIFGSFFTLNLFIGVII. The Cytoplasmic portion of the chain corresponds to 1290–1342; that stretch reads DNFNQQQKKLGGQDIFMTEEQKKYYNAMKKLGTKKPQKPIPRPLNKCQAFVFD. The IV repeat unit spans residues 1329–1619; sequence IPRPLNKCQA…WEKFDPEATQ (291 aa). A helical membrane pass occupies residues 1343 to 1366; sequence LVTSQVFDVIILGLIVTNMIIMMA. The Extracellular segment spans residues 1367–1377; that stretch reads ESEGQPNEVKK. The helical transmembrane segment at 1378 to 1401 threads the bilayer; it reads IFDILNIVFVVIFTVECLIKVFAL. Topologically, residues 1402–1407 are cytoplasmic; that stretch reads RQHYFT. Residues 1408–1431 form a helical membrane-spanning segment; that stretch reads NGWNLFDCVVVVLSIISTLVSGLE. Topologically, residues 1432-1440 are extracellular; that stretch reads NSNVFPPTL. The chain crosses the membrane as a helical; Voltage-sensor span at residues 1441–1463; sequence FRIVRLARIGRILRLVRAARGIR. Residues 1464 to 1478 lie on the Cytoplasmic side of the membrane; sequence TLLFALMMSLPSLFN. Residues 1479-1501 traverse the membrane as a helical segment; it reads IGLLLFLVMFIYAIFGMNWFSKV. Topologically, residues 1502 to 1515 are extracellular; that stretch reads KRGSGIDDIFNFDT. An intramembrane region (pore-forming) is located at residues 1516 to 1538; the sequence is FSGSMLCLFQITTSAGWDALLNP. The Extracellular portion of the chain corresponds to 1539–1559; the sequence is MLESKASCNSSSQESCQQPQI. A helical transmembrane segment spans residues 1560–1584; sequence AIVYFVSYIIISFLIVVNMYIAVIL. At 1585 to 1765 the chain is on the cytoplasmic side; that stretch reads ENFNTATEES…DVPKIKVHCD (181 aa).

Belongs to the sodium channel (TC 1.A.1.10) family. Nav1.9/SCN11A subfamily. The voltage-resistant sodium channel consists of an ion conducting pore forming alpha-subunit regulated by one or more auxiliary subunits SCN1B, SCN2B and SCN3B. In terms of tissue distribution, expressed in the dorsal root ganglia (C-fiber neurons), spinal cord, trigeminal ganglia, testis, ovary, uterus and small intestine.

The protein resides in the cell membrane. The catalysed reaction is Na(+)(in) = Na(+)(out). Its function is as follows. Sodium channel mediating the voltage-dependent sodium ion permeability of excitable membranes. Assuming opened or closed conformations in response to the voltage difference across the membrane, the protein forms a sodium-selective channel through which sodium ions may pass in accordance with their electrochemical gradient. Involved in membrane depolarization during action potential in nociceptors which function as key relay stations for the electrical transmission of pain signals from the periphery to the central nervous system. Also involved in rapid BDNF-evoked neuronal depolarization. The protein is Sodium channel protein type 11 subunit alpha of Mus musculus (Mouse).